Here is a 256-residue protein sequence, read N- to C-terminus: Ribonuclease HII (256 aa).

The region spanning 72 to 256 is the RNase H type-2 domain; that stretch reads QYIAGMDEVG…SFNPVPKYLN (185 aa). A divalent metal cation contacts are provided by aspartate 78, glutamate 79, and aspartate 170.

It belongs to the RNase HII family. The cofactor is Mn(2+). Requires Mg(2+) as cofactor.

It is found in the cytoplasm. The enzyme catalyses Endonucleolytic cleavage to 5'-phosphomonoester.. Its function is as follows. Endonuclease that specifically degrades the RNA of RNA-DNA hybrids. This chain is Ribonuclease HII, found in Limosilactobacillus reuteri (strain DSM 20016) (Lactobacillus reuteri).